The following is a 320-amino-acid chain: Cytochrome f (320 aa).

The first 35 residues, 1-35 (MQTRNAFSWIKKEITRSISVLLMIYIITRAPISNA), serve as a signal peptide directing secretion. Heme is bound by residues Tyr-36, Cys-56, Cys-59, and His-60. The helical transmembrane segment at 286-305 (VQGLLLFLASIILAQIFLVL) threads the bilayer.

This sequence belongs to the cytochrome f family. In terms of assembly, the 4 large subunits of the cytochrome b6-f complex are cytochrome b6, subunit IV (17 kDa polypeptide, petD), cytochrome f and the Rieske protein, while the 4 small subunits are PetG, PetL, PetM and PetN. The complex functions as a dimer. It depends on heme as a cofactor.

The protein localises to the plastid. It localises to the chloroplast thylakoid membrane. In terms of biological role, component of the cytochrome b6-f complex, which mediates electron transfer between photosystem II (PSII) and photosystem I (PSI), cyclic electron flow around PSI, and state transitions. This chain is Cytochrome f (petA), found in Vicia faba (Broad bean).